We begin with the raw amino-acid sequence, 262 residues long: Dehydrin COR410 (262 aa).

Disordered regions lie at residues 1 to 153 (MEDE…HDTD) and 187 to 262 (LPGG…KPSA). 2 stretches are compositionally biased toward basic and acidic residues: residues 34–45 (KKAEEDKEKEEE) and 53–74 (VSVE…KETL). The span at 89–101 (SDEEEEEVIDDNG) shows a compositional bias: acidic residues. A run of 2 repeats spans residues 106–126 (RKKK…HKDT) and 173–193 (EEEK…GHKK). A 3 X 21 AA repeats, Lys-rich region spans residues 106-245 (RKKKKGLKEK…MDKLPGYHKT (140 aa)). Composition is skewed to basic and acidic residues over residues 113–130 (KEKL…EGEH) and 187–196 (LPGGHKKPED). Over residues 197-209 (AAAVPVTHAAPAP) the composition is skewed to low complexity. Residues 225 to 245 (AKEKKGLLGKIMDKLPGYHKT) form repeat 3. Basic and acidic residues predominate over residues 244 to 262 (KTGEEDKAAAATGEHKPSA).

As to expression, expressed in roots, crown and leaves during cold acclimation.

This is Dehydrin COR410 (COR410) from Triticum aestivum (Wheat).